The chain runs to 434 residues: Glutamate-1-semialdehyde 2,1-aminomutase 1 (434 aa).

K270 bears the N6-(pyridoxal phosphate)lysine mark.

It belongs to the class-III pyridoxal-phosphate-dependent aminotransferase family. HemL subfamily. Homodimer. Pyridoxal 5'-phosphate is required as a cofactor.

Its subcellular location is the cytoplasm. It catalyses the reaction (S)-4-amino-5-oxopentanoate = 5-aminolevulinate. Its pathway is porphyrin-containing compound metabolism; protoporphyrin-IX biosynthesis; 5-aminolevulinate from L-glutamyl-tRNA(Glu): step 2/2. The sequence is that of Glutamate-1-semialdehyde 2,1-aminomutase 1 from Bacillus thuringiensis (strain Al Hakam).